The chain runs to 198 residues: Pyridoxal 5'-phosphate synthase subunit PdxT (198 aa).

49–51 (GES) serves as a coordination point for L-glutamine. Cys-81 functions as the Nucleophile in the catalytic mechanism. L-glutamine contacts are provided by residues Arg-113 and 141-142 (IR). Catalysis depends on charge relay system residues His-177 and Glu-179.

Belongs to the glutaminase PdxT/SNO family. In terms of assembly, in the presence of PdxS, forms a dodecamer of heterodimers. Only shows activity in the heterodimer.

The enzyme catalyses aldehydo-D-ribose 5-phosphate + D-glyceraldehyde 3-phosphate + L-glutamine = pyridoxal 5'-phosphate + L-glutamate + phosphate + 3 H2O + H(+). It carries out the reaction L-glutamine + H2O = L-glutamate + NH4(+). It functions in the pathway cofactor biosynthesis; pyridoxal 5'-phosphate biosynthesis. In terms of biological role, catalyzes the hydrolysis of glutamine to glutamate and ammonia as part of the biosynthesis of pyridoxal 5'-phosphate. The resulting ammonia molecule is channeled to the active site of PdxS. The sequence is that of Pyridoxal 5'-phosphate synthase subunit PdxT from Mycobacterium avium (strain 104).